A 138-amino-acid polypeptide reads, in one-letter code: Acidic phospholipase A2 daboiatoxin A chain (138 aa).

An N-terminal signal peptide occupies residues 1–16 (MRTLWIMAVCLIGVEG). 7 cysteine pairs are disulfide-bonded: C42-C131, C44-C60, C59-C111, C65-C138, C66-C104, C73-C97, and C91-C102. Positions 43, 45, and 47 each coordinate Ca(2+). H63 is an active-site residue. D64 is a Ca(2+) binding site. Residue D105 is part of the active site.

The protein belongs to the phospholipase A2 family. Group II subfamily. D49 sub-subfamily. Heterodimer of A and B chain; non-covalently linked. The acidic protein (B chain) has phospholipase A2 activity and the A chain weakly inhibits the B chain enzymatic activity but potentiates its lethal potency. It depends on Ca(2+) as a cofactor. In terms of tissue distribution, expressed by the venom gland.

It localises to the secreted. It carries out the reaction a 1,2-diacyl-sn-glycero-3-phosphocholine + H2O = a 1-acyl-sn-glycero-3-phosphocholine + a fatty acid + H(+). In terms of biological role, heterodimer (A and B chains): phospholipase A2 that acts as a presynaptic neurotoxin and shows a PLA2 activity of 1377 umol/min/mg. In vivo, induces edema and produces neurotoxic symptoms in mice. Also exhibits indirect hemolysis, a strong myonecrotic activity and cytotoxicity. PLA2 catalyzes the calcium-dependent hydrolysis of the 2-acyl groups in 3-sn-phosphoglycerides. Its function is as follows. Monomer: Snake venom phospholipase A2 (PLA2) that shows a PLA2 activity of 578 umol/min/mg. The protein is Acidic phospholipase A2 daboiatoxin A chain of Daboia siamensis (Eastern Russel's viper).